We begin with the raw amino-acid sequence, 47 residues long: Large ribosomal subunit protein eL40 (47 aa).

This sequence belongs to the eukaryotic ribosomal protein eL40 family.

The polypeptide is Large ribosomal subunit protein eL40 (Methanococcus vannielii (strain ATCC 35089 / DSM 1224 / JCM 13029 / OCM 148 / SB)).